The following is a 395-amino-acid chain: Elongation factor Tu (395 aa).

The tr-type G domain occupies 10 to 205 (KPHVNIGTIG…VDNWIPIPPR (196 aa)). The tract at residues 19 to 26 (GHVDHGKT) is G1. GTP is bound at residue 19 to 26 (GHVDHGKT). Threonine 26 is a Mg(2+) binding site. The G2 stretch occupies residues 60-64 (GITIN). The G3 stretch occupies residues 81-84 (DCPG). Residues 81–85 (DCPGH) and 136–139 (NKVD) each bind GTP. A G4 region spans residues 136 to 139 (NKVD). The interval 174–176 (SAL) is G5.

The protein belongs to the TRAFAC class translation factor GTPase superfamily. Classic translation factor GTPase family. EF-Tu/EF-1A subfamily. In terms of assembly, monomer.

It is found in the cytoplasm. It carries out the reaction GTP + H2O = GDP + phosphate + H(+). Functionally, GTP hydrolase that promotes the GTP-dependent binding of aminoacyl-tRNA to the A-site of ribosomes during protein biosynthesis. The chain is Elongation factor Tu from Hymenobacter ocellatus (Parahymenobacter ocellatus).